The primary structure comprises 111 residues: MDHRDINTNMEALREALRYKNEVAGHGFSFDDGDLVWREEDDATWRRLCDVVNALISSKRMQRVLYMDLSITKGEGHLLLVDLQGTKNRLYKEPRFRRHLILIEDFLAYPR.

The protein belongs to the novirhabdovirus NV protein family.

Its function is as follows. Plays an essential role for the viral pathogenicity. The chain is Non-virion protein (NV) from Salmo (IHNV).